Reading from the N-terminus, the 717-residue chain is SUN domain-containing protein 2 (717 aa).

The interval 1–66 (MSRRSQRLTR…PQLGPSSDAH (66 aa)) is disordered. The interval 1 to 139 (MSRRSQRLTR…SSSGYSSEDD (139 aa)) is LMNA-binding. Topologically, residues 1–212 (MSRRSQRLTR…LTRRFSSLKT (212 aa)) are nuclear. S12 carries the phosphoserine modification. Over residues 19-32 (SSSSGGSSVAGSQS) the composition is skewed to low complexity. 2 positions are modified to phosphoserine: S38 and S54. T107 carries the post-translational modification Phosphothreonine. S110, S113, S116, and S136 each carry phosphoserine. A helical membrane pass occupies residues 213 to 233 (FLWFLLPLLLLTCLTYGAWYF). The Perinuclear space segment spans residues 234–717 (YPYGLQTFHP…RFRVHGEPAH (484 aa)). Coiled-coil stretches lie at residues 273–296 (EQRVMSRVHSLERRLEALAAEFSS), 348–440 (RRET…EEVG), and 475–506 (LLQREEMQAQLRELESKILTHVAEMQGKSARE). Residues 507–717 (AAASLSLTLQ…RFRVHGEPAH (211 aa)) are sufficient for interaction with SYNE1 and SYNE2. In terms of domain architecture, SUN spans 555-716 (GASVISTRCS…YRFRVHGEPA (162 aa)). C601 and C705 are disulfide-bonded. The N-linked (GlcNAc...) asparagine glycan is linked to N636.

As to quaternary structure, core component of the LINC complex which is composed of inner nuclear membrane SUN domain-containing proteins coupled to outer nuclear membrane KASH domain-containing nesprins. SUN and KASH domain-containing proteins seem to bind each other promiscuously; however, differentially expression of LINC complex constituents is giving rise to specific assemblies. At least SUN1/2-containing core LINC complexes are proposed to be hexameric composed of three protomers of each KASH and SUN domain-containing protein. Interacts with SYNE2; the SUN2:SYNE2/KASH2 LINC complex is a heterohexamer; the homotrimeric cloverleave-like conformation of the SUN domain is a prerequisite for LINC complex formation in which three separate SYNE2/KASH2 peptides bind at the interface of adjacent SUN domains. Component of a probable SUN2:KASH5 LINC complex. Interacts with SYNE1 and SYNE3; probably forming respective LINC complexes. Interacts with A-type lamin. Interaction with lamins B1 and C is hardly detectable. Interacts with EMD and RAB5A. Interacts with TMEM43. Interacts with TMEM201. Post-translationally, the disulfide bond with SYNE2 is required for stability of the SUN2:SYNE2/KASH2 LINC complex under tensile forces though not required for the interaction. The disulfide bond is proposed to be conserved in LINC complexes involved in force transmission. In terms of tissue distribution, widely expressed. Highly expressed in heart, lung and muscle. Weakly expressed in fetal heart. Slightly overexpressed in some heart tissues form patients with congenital heart defects.

The protein localises to the nucleus inner membrane. It is found in the nucleus envelope. The protein resides in the endosome membrane. As a component of the LINC (LInker of Nucleoskeleton and Cytoskeleton) complex, involved in the connection between the nuclear lamina and the cytoskeleton. The nucleocytoplasmic interactions established by the LINC complex play an important role in the transmission of mechanical forces across the nuclear envelope and in nuclear movement and positioning. Specifically, SYNE2 and SUN2 assemble in arrays of transmembrane actin-associated nuclear (TAN) lines which are bound to F-actin cables and couple the nucleus to retrograde actin flow during actin-dependent nuclear movement. Required for interkinetic nuclear migration (INM) and essential for nucleokinesis and centrosome-nucleus coupling during radial neuronal migration in the cerebral cortex and during glial migration. Required for nuclear migration in retinal photoreceptor progenitors implicating association with cytoplasmic dynein-dynactin and kinesin motor complexes, and probably B-type lamins; SUN1 and SUN2 seem to act redundantly. The SUN1/2:KASH5 LINC complex couples telomeres to microtubules during meiosis; SUN1 and SUN2 seem to act at least partial redundantly. Anchors chromosome movement in the prophase of meiosis and is involved in selective gene expression of coding and non-coding RNAs needed for gametogenesis. Required for telomere attachment to nuclear envelope and gametogenesis. May also function on endocytic vesicles as a receptor for RAB5-GDP and participate in the activation of RAB5. This chain is SUN domain-containing protein 2, found in Homo sapiens (Human).